A 1458-amino-acid polypeptide reads, in one-letter code: ATPase family AAA domain-containing protein 2B (1458 aa).

The disordered stretch occupies residues 1-155 (MVNTRKSSLR…LRGEKKGDGD (155 aa)). At Ser-16 the chain carries Phosphoserine. Gly residues predominate over residues 23 to 33 (PGAGAEPGATG). Positions 34–58 (GSSHFISSRTRSSKTRAASCPAAKA) are enriched in low complexity. Phosphoserine is present on residues Ser-79, Ser-81, and Ser-86. Residues 99-115 (VCKDKSKSRSTGQREEW) are compositionally biased toward basic and acidic residues. Polar residues predominate over residues 116–129 (NLSTGQARLTSQPG). The residue at position 140 (Ser-140) is a Phosphoserine. Residue Thr-221 is modified to Phosphothreonine. The segment at 244–286 (NSYGIQNHHEVSTEGEEEESQEEDGDIEVEEAEGEENDRPYNL) is disordered. The span at 256 to 279 (TEGEEEESQEEDGDIEVEEAEGEE) shows a compositional bias: acidic residues. Phosphoserine is present on Ser-318. The segment covering 321-332 (RRSHIRRKKHAI) has biased composition (basic residues). The tract at residues 321–353 (RRSHIRRKKHAIHSSDTTSSDEERFERRKSKSM) is disordered. 441 to 448 (GPPGTGKT) serves as a coordination point for ATP. Ser-939 bears the Phosphoserine mark. Residues 943 to 974 (QLSESEKSRMEDQEENTLRELRLFLRDVTKRL) are a coiled coil. The Bromo domain maps to 951-1066 (RMEDQEENTL…DTAHAIIAAE (116 aa)). Disordered stretches follow at residues 1189–1208 (DCHE…NDES), 1217–1257 (QGQR…EQTS), and 1309–1330 (LLED…DDLE). Residues 1240 to 1252 (NESLLVNSSSSLN) show a composition bias toward low complexity. Residues Ser-1338 and Ser-1347 each carry the phosphoserine modification.

This sequence belongs to the AAA ATPase family. Binds acetylated lysine residues in histone H1.4, H2A, H2B, H3 and H4 (in vitro).

It localises to the nucleus. The protein is ATPase family AAA domain-containing protein 2B (ATAD2B) of Homo sapiens (Human).